A 189-amino-acid polypeptide reads, in one-letter code: Cell division protein SepF (189 aa).

The tract at residues 18-64 (EVTDHEDVAKERPVKVQKTEQTPSQQQRKPERPQETVPPRRQHIKSD) is disordered. Residues 22–35 (HEDVAKERPVKVQK) are compositionally biased toward basic and acidic residues.

The protein belongs to the SepF family. As to quaternary structure, homodimer. Interacts with FtsZ.

It is found in the cytoplasm. Its function is as follows. Cell division protein that is part of the divisome complex and is recruited early to the Z-ring. Probably stimulates Z-ring formation, perhaps through the cross-linking of FtsZ protofilaments. Its function overlaps with FtsA. This Streptococcus thermophilus (strain ATCC BAA-250 / LMG 18311) protein is Cell division protein SepF.